The sequence spans 304 residues: MAKIEKNAPTMEKKPELFNIMEVDGVPTLILSKEWWEKVCNFQAKPDDLILATYPKSGTTWMHEILDMILNDGDVEKCKRAQTLDRHAFLELKFPHKEKPDLEFVLEMSSPQLIKTHLPSHLIPPSIWKENCKIVYVARNPKDCLVSYYHFHRMASFMPDPQNLEEFYEKFMSGKVVGGSWFDHVKGWWAAKDMHRILYLFYEDIKKDPKREIEKILKFLEKDISEEILNKIIYHTSFDVMKQNPMTNYTTLPTSIMDHSISPFMRKGMPGDWKNYFTVAQNEEFDKDYQKKMAGSTLTFRTEI.

56–61 (KSGTTW) serves as a coordination point for 3'-phosphoadenylyl sulfate. 115–117 (KTH) lines the substrate pocket. The Proton acceptor role is filled by His-117. Residues Arg-139, Ser-147, Tyr-202, 236–241 (TSFDVM), and 264–268 (FMRKG) each bind 3'-phosphoadenylyl sulfate.

This sequence belongs to the sulfotransferase 1 family. Not detectable in any of the tissues tested. In terms of tissue distribution, expressed in the small intestine.

Its subcellular location is the cytoplasm. It catalyses the reaction an alcohol + 3'-phosphoadenylyl sulfate = an alkyl sulfate + adenosine 3',5'-bisphosphate + H(+). The enzyme catalyses a phenol + 3'-phosphoadenylyl sulfate = an aryl sulfate + adenosine 3',5'-bisphosphate + H(+). The catalysed reaction is lithocholate + 3'-phosphoadenylyl sulfate = lithocholate sulfate + adenosine 3',5'-bisphosphate + H(+). In terms of biological role, sulfotransferase that utilizes 3'-phospho-5'-adenylyl sulfate (PAPS) as sulfonate donor. Has sulfotransferase activity towards various substrates, such as bile acids, thyroid hormones and toward xenobiotic compounds such as chloro phenols and hydroxypyrenes. Lithocholic acid appears to be the best substrate among the endogenous compounds tested and 3,3',5,5'-tetrachloro-4,4'-biphenyldiol shows the highest specific activity among the xenobiotic compounds. Exhibits weak sulphating activity and only toward chloro phenols (pentachlorophenol and 3,3',5,5'-tetrachloro-4,4'-biphenyldiol). This chain is Sulfotransferase 1C3 (SULT1C3), found in Homo sapiens (Human).